A 217-amino-acid polypeptide reads, in one-letter code: tRNA (guanine-N(7)-)-methyltransferase (217 aa).

4 residues coordinate S-adenosyl-L-methionine: glutamate 43, aspartate 68, asparagine 101, and asparagine 123. Lysine 127 provides a ligand contact to substrate. Residues 129–134 form an interaction with RNA region; it reads RHNKRR. Substrate contacts are provided by residues aspartate 159 and 196–199; that span reads TEYE.

The protein belongs to the class I-like SAM-binding methyltransferase superfamily. TrmB family.

The catalysed reaction is guanosine(46) in tRNA + S-adenosyl-L-methionine = N(7)-methylguanosine(46) in tRNA + S-adenosyl-L-homocysteine. Its pathway is tRNA modification; N(7)-methylguanine-tRNA biosynthesis. In terms of biological role, catalyzes the formation of N(7)-methylguanine at position 46 (m7G46) in tRNA. In Clostridium botulinum (strain Langeland / NCTC 10281 / Type F), this protein is tRNA (guanine-N(7)-)-methyltransferase.